Here is a 191-residue protein sequence, read N- to C-terminus: RRP15-like protein (191 aa).

Residues 1 to 11 are compositionally biased toward basic and acidic residues; that stretch reads MSTKNRDRLVV. The interval 1-52 is disordered; sequence MSTKNRDRLVVTEDSDDDNEREEMSSGGESGEEGPSSVDGGAGDADETVAFP. Residues 53–84 adopt a coiled-coil conformation; sequence AIERRKKKVIKKLTKKEQSLKKSVKEYRIKLA. The segment covering 119-153 has biased composition (basic and acidic residues); the sequence is QKTMSDAVKEKMTARERREARQRFDGKNFDSDRFA. Residues 119–191 form a disordered region; that stretch reads QKTMSDAVKE…IDTGNYSDED (73 aa). Over residues 166-191 the composition is skewed to acidic residues; the sequence is GEDDDGEDQMDIGEEQIDTGNYSDED.

This sequence belongs to the RRP15 family.

This Caenorhabditis elegans protein is RRP15-like protein.